The primary structure comprises 74 residues: Putative membrane protein insertion efficiency factor (74 aa).

This sequence belongs to the UPF0161 family.

The protein localises to the cell inner membrane. Its function is as follows. Could be involved in insertion of integral membrane proteins into the membrane. In Leptospira interrogans serogroup Icterohaemorrhagiae serovar copenhageni (strain Fiocruz L1-130), this protein is Putative membrane protein insertion efficiency factor.